The sequence spans 287 residues: NH(3)-dependent NAD(+) synthetase (287 aa).

53 to 60 is an ATP binding site; sequence GISGGQDS. Asp-59 contacts Mg(2+). Arg-146 serves as a coordination point for deamido-NAD(+). An ATP-binding site is contributed by Thr-166. Position 171 (Glu-171) interacts with Mg(2+). Residues Lys-179 and Asp-186 each coordinate deamido-NAD(+). ATP is bound by residues Lys-195 and Thr-217. 266–267 is a deamido-NAD(+) binding site; it reads HK.

The protein belongs to the NAD synthetase family. As to quaternary structure, homodimer.

The enzyme catalyses deamido-NAD(+) + NH4(+) + ATP = AMP + diphosphate + NAD(+) + H(+). Its pathway is cofactor biosynthesis; NAD(+) biosynthesis; NAD(+) from deamido-NAD(+) (ammonia route): step 1/1. Functionally, catalyzes the ATP-dependent amidation of deamido-NAD to form NAD. Uses ammonia as a nitrogen source. This Deinococcus radiodurans (strain ATCC 13939 / DSM 20539 / JCM 16871 / CCUG 27074 / LMG 4051 / NBRC 15346 / NCIMB 9279 / VKM B-1422 / R1) protein is NH(3)-dependent NAD(+) synthetase.